A 103-amino-acid chain; its full sequence is Small ribosomal subunit protein bS18c (103 aa).

Belongs to the bacterial ribosomal protein bS18 family. Part of the 30S ribosomal subunit.

It is found in the plastid. It localises to the chloroplast. The polypeptide is Small ribosomal subunit protein bS18c (rps18) (Chlorella vulgaris (Green alga)).